A 163-amino-acid polypeptide reads, in one-letter code: Phosphopantetheine adenylyltransferase (163 aa).

Substrate is bound at residue Thr10. Residues 10 to 11 and His18 contribute to the ATP site; that span reads TF. Positions 42, 74, and 88 each coordinate substrate. ATP-binding positions include 89-91, Glu99, and 124-130; these read GLR and NSFISST.

This sequence belongs to the bacterial CoaD family. As to quaternary structure, homohexamer. Requires Mg(2+) as cofactor.

It localises to the cytoplasm. It carries out the reaction (R)-4'-phosphopantetheine + ATP + H(+) = 3'-dephospho-CoA + diphosphate. The protein operates within cofactor biosynthesis; coenzyme A biosynthesis; CoA from (R)-pantothenate: step 4/5. Reversibly transfers an adenylyl group from ATP to 4'-phosphopantetheine, yielding dephospho-CoA (dPCoA) and pyrophosphate. In Shewanella baltica (strain OS223), this protein is Phosphopantetheine adenylyltransferase.